We begin with the raw amino-acid sequence, 490 residues long: Cytochrome P450 2C39 (490 aa).

The first 25 residues, 1–25 (MDLVTFLVLTLSSLILLSLWRQSCG), serve as a signal peptide directing secretion. Cys-435 provides a ligand contact to heme.

The protein belongs to the cytochrome P450 family. It depends on heme as a cofactor. As to expression, liver.

The protein localises to the endoplasmic reticulum membrane. It is found in the microsome membrane. It catalyses the reaction an organic molecule + reduced [NADPH--hemoprotein reductase] + O2 = an alcohol + oxidized [NADPH--hemoprotein reductase] + H2O + H(+). It carries out the reaction (5Z,8Z,11Z,14Z)-eicosatetraenoate + reduced [NADPH--hemoprotein reductase] + O2 = 11,12-epoxy-(5Z,8Z,14Z)-eicosatrienoate + oxidized [NADPH--hemoprotein reductase] + H2O + H(+). The catalysed reaction is (5Z,8Z,11Z,14Z)-eicosatetraenoate + reduced [NADPH--hemoprotein reductase] + O2 = 14,15-epoxy-(5Z,8Z,11Z)-eicosatrienoate + oxidized [NADPH--hemoprotein reductase] + H2O + H(+). It functions in the pathway lipid metabolism; arachidonate metabolism. Functionally, a cytochrome P450 monooxygenase that primarily catalyzes the epoxidation of 11,12 and 14,15 double bonds of (5Z,8Z,11Z,14Z)-eicosatetraenoic acid (arachidonate) forming 11,12- and 14,15-epoxyeicosatrienoic acids (11,12- and 14,15-EET) regioisomers. Mechanistically, uses molecular oxygen inserting one oxygen atom into a substrate, and reducing the second into a water molecule, with two electrons provided by NADPH via cytochrome P450 reductase (CPR; NADPH--hemoprotein reductase). This chain is Cytochrome P450 2C39, found in Mus musculus (Mouse).